A 273-amino-acid polypeptide reads, in one-letter code: Dermonecrotic toxin SdSicTox-betaIIB1aiii (273 aa).

His4 is an active-site residue. Glu24 and Asp26 together coordinate Mg(2+). His40 (nucleophile) is an active-site residue. Disulfide bonds link Cys44–Cys50 and Cys46–Cys189. Asp84 is a binding site for Mg(2+).

It belongs to the arthropod phospholipase D family. Class II subfamily. Requires Mg(2+) as cofactor. As to expression, expressed by the venom gland.

It is found in the secreted. The enzyme catalyses an N-(acyl)-sphingosylphosphocholine = an N-(acyl)-sphingosyl-1,3-cyclic phosphate + choline. It carries out the reaction an N-(acyl)-sphingosylphosphoethanolamine = an N-(acyl)-sphingosyl-1,3-cyclic phosphate + ethanolamine. It catalyses the reaction a 1-acyl-sn-glycero-3-phosphocholine = a 1-acyl-sn-glycero-2,3-cyclic phosphate + choline. The catalysed reaction is a 1-acyl-sn-glycero-3-phosphoethanolamine = a 1-acyl-sn-glycero-2,3-cyclic phosphate + ethanolamine. Functionally, dermonecrotic toxins cleave the phosphodiester linkage between the phosphate and headgroup of certain phospholipids (sphingolipid and lysolipid substrates), forming an alcohol (often choline) and a cyclic phosphate. This toxin acts on sphingomyelin (SM). It may also act on ceramide phosphoethanolamine (CPE), lysophosphatidylcholine (LPC) and lysophosphatidylethanolamine (LPE), but not on lysophosphatidylserine (LPS), and lysophosphatidylglycerol (LPG). It acts by transphosphatidylation, releasing exclusively cyclic phosphate products as second products. Induces dermonecrosis, hemolysis, increased vascular permeability, edema, inflammatory response, and platelet aggregation. This Sicarius cf. damarensis (strain GJB-2008) (Six-eyed sand spider) protein is Dermonecrotic toxin SdSicTox-betaIIB1aiii.